The sequence spans 393 residues: S-adenosylmethionine synthase 2 (393 aa).

E9 provides a ligand contact to Mg(2+). H15 lines the ATP pocket. Position 43 (E43) interacts with K(+). L-methionine contacts are provided by E56 and Q99. ATP is bound by residues 167-169 (DGK), 235-238 (SGRF), D246, 252-253 (RK), A269, K273, and K277. Residue D246 participates in L-methionine binding. K277 contacts L-methionine.

Belongs to the AdoMet synthase family. Homotetramer. Mn(2+) serves as cofactor. It depends on Mg(2+) as a cofactor. The cofactor is Co(2+). Requires K(+) as cofactor.

Its subcellular location is the cytoplasm. It carries out the reaction L-methionine + ATP + H2O = S-adenosyl-L-methionine + phosphate + diphosphate. Its pathway is amino-acid biosynthesis; S-adenosyl-L-methionine biosynthesis; S-adenosyl-L-methionine from L-methionine: step 1/1. Catalyzes the formation of S-adenosylmethionine from methionine and ATP. The reaction comprises two steps that are both catalyzed by the same enzyme: formation of S-adenosylmethionine (AdoMet) and triphosphate, and subsequent hydrolysis of the triphosphate. May be involved in the synthesis of betain in response to abiotic stress such as high salinity. In Beta vulgaris (Sugar beet), this protein is S-adenosylmethionine synthase 2 (SAMS2).